A 515-amino-acid polypeptide reads, in one-letter code: G-protein coupled receptor 176 (515 aa).

At 1-41 (MGHNSSWVSPNTSHPRNTSGAEAGANLSAFGELSEAQLYRQ) the chain is on the extracellular side. N-linked (GlcNAc...) asparagine glycans are attached at residues Asn4, Asn11, Asn17, and Asn26. A helical membrane pass occupies residues 42 to 64 (FTTTVQVVIFIGSLLGNFMVLWS). Topologically, residues 65–77 (TCRTTVFKSVTNR) are cytoplasmic. Residues 78-98 (FIKNLACSGICASVVCVPFDI) traverse the membrane as a helical segment. Over 99–108 (ILSSSPHCCW) the chain is Extracellular. The chain crosses the membrane as a helical span at residues 109-129 (WIYTMLFCKVLKFLHKVFCSV). The Cytoplasmic portion of the chain corresponds to 130 to 157 (TVLSFPAIALDRYYSVLYPLERKISDAK). Residues 158–177 (SRELVMYIWAHAVVASVPVF) traverse the membrane as a helical segment. Over 178–204 (AVTNVADIYAMSTCTEVWSNSLGHLVY) the chain is Extracellular. The chain crosses the membrane as a helical span at residues 205 to 225 (VLIYNVTTVIVPVAVVFLFLI). Topologically, residues 226–264 (LIRRALSASQKKKVIIAALRTPQNTISIPYASQREAELH) are cytoplasmic. The chain crosses the membrane as a helical span at residues 265 to 285 (ATLLSMVTVFILCSVPYATLV). Topologically, residues 286 to 301 (VYQTVLNVPNTSVFLL) are extracellular. The helical transmembrane segment at 302–322 (LTAIWLPKVSLLANPVLFLTV) threads the bilayer. Over 323 to 515 (NKSVRKCLVG…KVSIFPKVDS (193 aa)) the chain is Cytoplasmic. The tract at residues 407 to 435 (SCPEGEQEPPQLAPSVPPPGTVDSEPRVS) is disordered. Positions 417 to 426 (QLAPSVPPPG) are enriched in pro residues.

This sequence belongs to the G-protein coupled receptor 1 family. In terms of tissue distribution, expressed mainly in the brain, with prominent expression in the SCN (at protein level).

It localises to the cell membrane. In terms of biological role, orphan receptor involved in normal circadian rhythm behavior. Acts through the G-protein subclass G(z)-alpha and has an agonist-independent basal activity to repress cAMP production. The sequence is that of G-protein coupled receptor 176 (Gpr176) from Mus musculus (Mouse).